The following is a 422-amino-acid chain: Inhibitory synaptic factor 2A (422 aa).

The segment at 143-163 (FLADSKEKSEAGPMEEPRPCS) is disordered. Over residues 146–160 (DSKEKSEAGPMEEPR) the composition is skewed to basic and acidic residues. Ser177 is subject to Phosphoserine. Positions 344–370 (TEVVDLKAQLQVMENLISSSQETIKVL) form a coiled coil.

It belongs to the INSYN2 family. As to quaternary structure, interacts with GPHN.

It is found in the postsynaptic density. Its function is as follows. Component of the protein machinery at the inhibitory synapses, probably acting as a scaffold. Inhibitory synapses dampen neuronal activity through postsynaptic hyperpolarization. This synaptic inhibition is fundamental for the functioning of the central nervous system, shaping and orchestrating the flow of information through neuronal networks to generate a precise neural code. This chain is Inhibitory synaptic factor 2A, found in Mus musculus (Mouse).